We begin with the raw amino-acid sequence, 669 residues long: MYLLIVILPLIGSFAAGFFGRFLGSRGVAVVTTTCVSLSSIFSCIAFYEVALCASACYIKIAPWIFSELFDAAWGFLFDSLTVILLLVVTIVSSLVHIYSISYMSEDPHSPRFFCYLSIFTFFMLMLVTGDNFIQLFLGWEGVGLASYLLINFWFTRIQANKAAIKAMLINRVGDFGLALGIMGCFTIFQTVDFSTIFACASAFSEPHHYFLFCNMGFHAITVICILVFIGAVGKSAQIGLHTWLPDAMEGPTPVSALIHAATMVTAGVFMIARCSPLFEYSPNALIVITFVGAMTSFFAATTGILQNDLKRVIAYSTCSQLGYMIFACGISNYSVSVFHLMNHACFKALLFLSAGSVIHAMSDEQDMRKMGGLASLLPFTYAMMLIGSLSLIGFPFLTGFYSKDVILELAYTKYTISGNFAFWLGSVSVFFTSYYSFRLLFLTFLAPTNSFKRDLSRCHDAPILMAIPLILLAFGSIFVGYLAKDMMIGLGTNFWANSLFILPKNEILAESEFATPTIIKLIPILFSTLGSFVAYSVNFVVNPLIFALKTSTFGNRLYCFFNKRWFFDKVFNDFLARSFLRFGYEVSFKALDKGAIEILGPYGISYTIRKMAQQISKIQSGFVYHYAFVMLLGLTIFISVIGLWDFISFWVDNRLYFIYIVSFLFINI.

The next 15 helical transmembrane spans lie at 3 to 23 (LLIV…GRFL), 50 to 70 (VALC…SELF), 81 to 100 (LTVI…HIYS), 119 to 139 (IFTF…LFLG), 178 to 198 (LALG…STIF), 211 to 231 (FLFC…VFIG), 253 to 273 (TPVS…FMIA), 286 to 306 (LIVI…TGIL), 322 to 342 (LGYM…FHLM), 377 to 397 (LLPF…GFPF), 423 to 443 (FWLG…LLFL), 464 to 484 (ILMA…GYLA), 522 to 542 (LIPI…NFVV), 628 to 648 (AFVM…WDFI), and 649 to 669 (SFWV…FINI).

This sequence belongs to the complex I subunit 5 family.

The protein resides in the mitochondrion inner membrane. It catalyses the reaction a ubiquinone + NADH + 5 H(+)(in) = a ubiquinol + NAD(+) + 4 H(+)(out). Functionally, core subunit of the mitochondrial membrane respiratory chain NADH dehydrogenase (Complex I) that is believed to belong to the minimal assembly required for catalysis. Complex I functions in the transfer of electrons from NADH to the respiratory chain. The immediate electron acceptor for the enzyme is believed to be ubiquinone. The protein is NADH-ubiquinone oxidoreductase chain 5 (ND5) of Marchantia polymorpha (Common liverwort).